The chain runs to 398 residues: Cytochrome b (398 aa).

4 helical membrane-spanning segments follow: residues 38 to 58 (FGSL…FLAM), 82 to 104 (WLLR…LHIF), 119 to 139 (VWCL…IGYV), and 185 to 205 (FFSL…LHLA). Residues His88 and His102 each contribute to the heme b site. 2 residues coordinate heme b: His189 and His203. His208 lines the a ubiquinone pocket. Helical transmembrane passes span 231–251 (FYVK…IWIF), 295–315 (AGGV…PFFK), 327–347 (IYQG…WIGC), and 354–373 (FVTI…AITP).

The protein belongs to the cytochrome b family. In terms of assembly, the main subunits of complex b-c1 are: cytochrome b, cytochrome c1 and the Rieske protein. It depends on heme b as a cofactor.

It is found in the mitochondrion inner membrane. Component of the ubiquinol-cytochrome c reductase complex (complex III or cytochrome b-c1 complex) that is part of the mitochondrial respiratory chain. The b-c1 complex mediates electron transfer from ubiquinol to cytochrome c. Contributes to the generation of a proton gradient across the mitochondrial membrane that is then used for ATP synthesis. This Triticum aestivum (Wheat) protein is Cytochrome b (MT-CYB).